The following is a 460-amino-acid chain: Ribosomal protein uS12 methylthiotransferase RimO (460 aa).

Positions 16-130 (NKIHFISLGC…ILSAIESKEY (115 aa)) constitute an MTTase N-terminal domain. [4Fe-4S] cluster-binding residues include cysteine 25, cysteine 61, cysteine 93, cysteine 164, cysteine 168, and cysteine 171. Positions 150–382 (STPKHYAYLK…SQAQKQNVEK (233 aa)) constitute a Radical SAM core domain. Positions 385–455 (QKLVGQVVEA…GYDLIGRVVK (71 aa)) constitute a TRAM domain.

The protein belongs to the methylthiotransferase family. RimO subfamily. It depends on [4Fe-4S] cluster as a cofactor.

It localises to the cytoplasm. The enzyme catalyses L-aspartate(89)-[ribosomal protein uS12]-hydrogen + (sulfur carrier)-SH + AH2 + 2 S-adenosyl-L-methionine = 3-methylsulfanyl-L-aspartate(89)-[ribosomal protein uS12]-hydrogen + (sulfur carrier)-H + 5'-deoxyadenosine + L-methionine + A + S-adenosyl-L-homocysteine + 2 H(+). Its function is as follows. Catalyzes the methylthiolation of an aspartic acid residue of ribosomal protein uS12. This chain is Ribosomal protein uS12 methylthiotransferase RimO, found in Chlamydia felis (strain Fe/C-56) (Chlamydophila felis).